We begin with the raw amino-acid sequence, 158 residues long: NAD(P)H-quinone oxidoreductase subunit J, chloroplastic (158 aa).

This sequence belongs to the complex I 30 kDa subunit family. NDH is composed of at least 16 different subunits, 5 of which are encoded in the nucleus.

Its subcellular location is the plastid. It localises to the chloroplast thylakoid membrane. It carries out the reaction a plastoquinone + NADH + (n+1) H(+)(in) = a plastoquinol + NAD(+) + n H(+)(out). It catalyses the reaction a plastoquinone + NADPH + (n+1) H(+)(in) = a plastoquinol + NADP(+) + n H(+)(out). Functionally, NDH shuttles electrons from NAD(P)H:plastoquinone, via FMN and iron-sulfur (Fe-S) centers, to quinones in the photosynthetic chain and possibly in a chloroplast respiratory chain. The immediate electron acceptor for the enzyme in this species is believed to be plastoquinone. Couples the redox reaction to proton translocation, and thus conserves the redox energy in a proton gradient. The protein is NAD(P)H-quinone oxidoreductase subunit J, chloroplastic of Nandina domestica (Heavenly bamboo).